A 116-amino-acid chain; its full sequence is HTH-type transcriptional regulator SarV (116 aa).

The segment at residues 51 to 74 is a DNA-binding region (H-T-H motif); the sequence is RDTLHFEMLWDTSKIDVIIRKIYK.

It belongs to the SarA family.

It is found in the cytoplasm. Its function is as follows. Part of the pathway by which MgrA and SarA control autolysis. The protein is HTH-type transcriptional regulator SarV (sarV) of Staphylococcus aureus (strain Mu50 / ATCC 700699).